The sequence spans 418 residues: Tyrosine--tRNA ligase (418 aa).

Tyr-34 serves as a coordination point for L-tyrosine. The 'HIGH' region signature appears at 39-48 (PTADSLHLGH). The L-tyrosine site is built by Tyr-169 and Gln-173. The short motif at 229-233 (KFGKS) is the 'KMSKS' region element. Lys-232 is an ATP binding site. Residues 352 to 418 (LNIVEILVSS…GKKKYAVLTY (67 aa)) enclose the S4 RNA-binding domain.

It belongs to the class-I aminoacyl-tRNA synthetase family. TyrS type 1 subfamily. Homodimer.

The protein localises to the cytoplasm. It catalyses the reaction tRNA(Tyr) + L-tyrosine + ATP = L-tyrosyl-tRNA(Tyr) + AMP + diphosphate + H(+). Functionally, catalyzes the attachment of tyrosine to tRNA(Tyr) in a two-step reaction: tyrosine is first activated by ATP to form Tyr-AMP and then transferred to the acceptor end of tRNA(Tyr). The protein is Tyrosine--tRNA ligase of Streptococcus uberis (strain ATCC BAA-854 / 0140J).